A 284-amino-acid polypeptide reads, in one-letter code: 4-diphosphocytidyl-2-C-methyl-D-erythritol kinase (284 aa).

Lysine 14 is a catalytic residue. 98–108 (PMGGGLGGGSS) contacts ATP. Residue aspartate 140 is part of the active site.

Belongs to the GHMP kinase family. IspE subfamily.

It carries out the reaction 4-CDP-2-C-methyl-D-erythritol + ATP = 4-CDP-2-C-methyl-D-erythritol 2-phosphate + ADP + H(+). The protein operates within isoprenoid biosynthesis; isopentenyl diphosphate biosynthesis via DXP pathway; isopentenyl diphosphate from 1-deoxy-D-xylulose 5-phosphate: step 3/6. In terms of biological role, catalyzes the phosphorylation of the position 2 hydroxy group of 4-diphosphocytidyl-2C-methyl-D-erythritol. The protein is 4-diphosphocytidyl-2-C-methyl-D-erythritol kinase of Shewanella piezotolerans (strain WP3 / JCM 13877).